Here is a 190-residue protein sequence, read N- to C-terminus: Holliday junction branch migration complex subunit RuvA (190 aa).

The tract at residues 1 to 63 (MLDFIKGKVI…EESIEIYGFL (63 aa)) is domain I. Residues 64-139 (ESSERDLFEE…ILPSLQYEKD (76 aa)) form a domain II region. A region of interest (flexible linker) is located at residue Asp-139. The interval 139–190 (DQKYDDILSALLNLGYKRLEAKEVLDKIYNNEKDEATIIRESLSILAGKDGK) is domain III.

The protein belongs to the RuvA family. In terms of assembly, homotetramer. Forms an RuvA(8)-RuvB(12)-Holliday junction (HJ) complex. HJ DNA is sandwiched between 2 RuvA tetramers; dsDNA enters through RuvA and exits via RuvB. An RuvB hexamer assembles on each DNA strand where it exits the tetramer. Each RuvB hexamer is contacted by two RuvA subunits (via domain III) on 2 adjacent RuvB subunits; this complex drives branch migration. In the full resolvosome a probable DNA-RuvA(4)-RuvB(12)-RuvC(2) complex forms which resolves the HJ.

The protein localises to the cytoplasm. The RuvA-RuvB-RuvC complex processes Holliday junction (HJ) DNA during genetic recombination and DNA repair, while the RuvA-RuvB complex plays an important role in the rescue of blocked DNA replication forks via replication fork reversal (RFR). RuvA specifically binds to HJ cruciform DNA, conferring on it an open structure. The RuvB hexamer acts as an ATP-dependent pump, pulling dsDNA into and through the RuvAB complex. HJ branch migration allows RuvC to scan DNA until it finds its consensus sequence, where it cleaves and resolves the cruciform DNA. This is Holliday junction branch migration complex subunit RuvA from Thermodesulfovibrio yellowstonii (strain ATCC 51303 / DSM 11347 / YP87).